Reading from the N-terminus, the 483-residue chain is Centrosomal protein cep57l1 (483 aa).

A coiled-coil region spans residues 94–228 (EHKKVLESEK…AQVQTSLEVN (135 aa)). 3 disordered regions span residues 237–261 (AQNS…SKEP), 303–325 (PQVS…GGSR), and 416–460 (KEQP…SKAS). Basic residues predominate over residues 243 to 252 (RKVKKKKQSK). The stretch at 375 to 418 (EDLERELDYVVKQMEIKSDQIMKLKRHQLNVNKLKKTAKLLKEQ) forms a coiled coil. Residues 420–435 (RPTSVTKLAADKQNTG) are compositionally biased toward polar residues.

This sequence belongs to the translokin family. In terms of assembly, interacts with clip1, mis12, ndc80 and zwint. Interacts with gamma-tubulin.

The protein resides in the cytoplasm. It localises to the cytoskeleton. The protein localises to the microtubule organizing center. It is found in the centrosome. Its subcellular location is the chromosome. The protein resides in the centromere. It localises to the kinetochore. The protein localises to the spindle. Functionally, required for spindle microtubule attachment to both kinetochores and centrosomes. Also functions to tether minus-ends of spindle microtubules to centrosomes. May act by forming ring-like structures around microtubules, or by serving as a cross-linker or scaffold at the attachment site. The protein is Centrosomal protein cep57l1 (cep57l1) of Xenopus tropicalis (Western clawed frog).